A 122-amino-acid polypeptide reads, in one-letter code: Cytochrome c3 hydrogenase large chain (122 aa).

Requires Fe cation as cofactor.

It carries out the reaction 2 Fe(III)-[cytochrome c3] + H2 = 2 Fe(II)-[cytochrome c3] + 2 H(+). The protein is Cytochrome c3 hydrogenase large chain (hoxG) of Acidithiobacillus ferrooxidans (Thiobacillus ferrooxidans).